Here is a 127-residue protein sequence, read N- to C-terminus: uncharacterized protein (127 aa).

Positions 1-16 are cleaved as a signal peptide; sequence MIKKIIFGIAILLSTS. The N-palmitoyl cysteine moiety is linked to residue Cys-17. Cys-17 carries the S-diacylglycerol cysteine lipid modification. Residues 56–101 adopt a coiled-coil conformation; that stretch reads EVREEIQKYRVAIVKINKKKRELYNRLSKEAQNFLAEQQKYKQKLS. Residues 107 to 118 are compositionally biased toward polar residues; sequence VENDQKNNTADS. Residues 107-127 form a disordered region; that stretch reads VENDQKNNTADSNDNKSKDTK.

It localises to the cell membrane. This is an uncharacterized protein from Rickettsia conorii (strain ATCC VR-613 / Malish 7).